The following is a 520-amino-acid chain: Na(+)/H(+) antiporter NhaB (520 aa).

12 consecutive transmembrane segments (helical) span residues 27 to 49, 62 to 82, 97 to 117, 120 to 140, 144 to 164, 202 to 222, 238 to 258, 303 to 323, 348 to 368, 391 to 411, 447 to 467, and 475 to 495; these read GFLI…LLVI, YPLL…MTSA, LLLI…LLIF, LLLG…AAAF, FLDA…FYGI, LMMH…VGEP, FLLR…VTCI, GLIG…VGLI, TEAL…AVII, LFYL…VGTV, ATPN…APLI, and VWMA…CVQF.

Belongs to the NhaB Na(+)/H(+) (TC 2.A.34) antiporter family.

It is found in the cell inner membrane. It carries out the reaction 2 Na(+)(in) + 3 H(+)(out) = 2 Na(+)(out) + 3 H(+)(in). Functionally, na(+)/H(+) antiporter that extrudes sodium in exchange for external protons. The chain is Na(+)/H(+) antiporter NhaB from Cronobacter sakazakii (strain ATCC BAA-894) (Enterobacter sakazakii).